The chain runs to 460 residues: Nucleosome assembly protein 1-like 2 (460 aa).

Basic and acidic residues predominate over residues 1-11; that stretch reads MAESVDHKELS. Disordered stretches follow at residues 1–87 and 213–238; these read MAES…DSDR and DEEE…EDPK. Over residues 213–223 the composition is skewed to acidic residues; the sequence is DEEEEEEEDDS. The Nuclear localization signal signature appears at 346–352; sequence IKKKQRH.

It belongs to the nucleosome assembly protein (NAP) family. In terms of tissue distribution, brain, specifically expressed in neurons.

It is found in the nucleus. Acidic protein which may be involved in interactions with other proteins or DNA. The protein is Nucleosome assembly protein 1-like 2 (Nap1l2) of Mus musculus (Mouse).